Consider the following 213-residue polypeptide: uncharacterized protein (213 aa).

This is an uncharacterized protein from Escherichia coli (strain K12).